Consider the following 380-residue polypeptide: Cytochrome b (380 aa).

The next 4 helical transmembrane spans lie at 34–54 (FGSL…FLAM), 78–99 (WLLR…YFHI), 114–134 (WYTG…GYIL), and 179–199 (FFTL…IHLL). Heme b contacts are provided by histidine 84 and histidine 98. Heme b contacts are provided by histidine 183 and histidine 197. An a ubiquinone-binding site is contributed by histidine 202. The next 4 helical transmembrane spans lie at 227–247 (YKDL…TLFL), 289–309 (LGGV…PTLH), 321–341 (FTQI…WIGA), and 348–368 (FIMI…LLIP).

It belongs to the cytochrome b family. In terms of assembly, the cytochrome bc1 complex contains 3 respiratory subunits (MT-CYB, CYC1 and UQCRFS1), 2 core proteins (UQCRC1 and UQCRC2) and probably 6 low-molecular weight proteins. The cofactor is heme b.

The protein resides in the mitochondrion inner membrane. In terms of biological role, component of the ubiquinol-cytochrome c reductase complex (complex III or cytochrome b-c1 complex) that is part of the mitochondrial respiratory chain. The b-c1 complex mediates electron transfer from ubiquinol to cytochrome c. Contributes to the generation of a proton gradient across the mitochondrial membrane that is then used for ATP synthesis. This chain is Cytochrome b (MT-CYB), found in Pelomedusa subrufa (African side-necked turtle).